The following is a 111-amino-acid chain: Large ribosomal subunit protein bL21 (111 aa).

The protein belongs to the bacterial ribosomal protein bL21 family. Part of the 50S ribosomal subunit. Contacts protein L20.

This protein binds to 23S rRNA in the presence of protein L20. This chain is Large ribosomal subunit protein bL21, found in Thermosynechococcus vestitus (strain NIES-2133 / IAM M-273 / BP-1).